A 192-amino-acid chain; its full sequence is Imidazoleglycerol-phosphate dehydratase (192 aa).

This sequence belongs to the imidazoleglycerol-phosphate dehydratase family.

It is found in the cytoplasm. The catalysed reaction is D-erythro-1-(imidazol-4-yl)glycerol 3-phosphate = 3-(imidazol-4-yl)-2-oxopropyl phosphate + H2O. The protein operates within amino-acid biosynthesis; L-histidine biosynthesis; L-histidine from 5-phospho-alpha-D-ribose 1-diphosphate: step 6/9. The polypeptide is Imidazoleglycerol-phosphate dehydratase (Caldivirga maquilingensis (strain ATCC 700844 / DSM 13496 / JCM 10307 / IC-167)).